The following is a 410-amino-acid chain: Extracellular serine proteinase (410 aa).

Residues 1-19 (MKRGGLWLLLGLLVLSACS) form the signal peptide. A propeptide spanning residues 20-132 (SNPPAASTQE…IEADQEVRAF (113 aa)) is cleaved from the precursor. The Inhibitor I9 domain occupies 45–130 (YIVVYKENAD…AYIEADQEVR (86 aa)). Positions 139–410 (TWGLDRIDQR…SPNLLLYTPF (272 aa)) constitute a Peptidase S8 domain. Catalysis depends on charge relay system residues aspartate 171, histidine 204, and serine 356.

It belongs to the peptidase S8 family. In terms of processing, contains 4 Cys residues that form two disulfide bonds. Post-translationally, glycosylated. This proteinase has a 0.7% carbohydrate content.

The protein localises to the secreted. Functionally, serine proteinase with preferred activity for amino acids with aromatic side groups at the P1' side of the scissible bond. The sequence is that of Extracellular serine proteinase from Thermus sp. (strain Rt41A).